The sequence spans 152 residues: Deoxyuridine 5'-triphosphate nucleotidohydrolase (152 aa).

Residues 71 to 73 (RSG), asparagine 84, 88 to 90 (LID), and methionine 98 contribute to the substrate site.

This sequence belongs to the dUTPase family. Mg(2+) serves as cofactor.

The catalysed reaction is dUTP + H2O = dUMP + diphosphate + H(+). It participates in pyrimidine metabolism; dUMP biosynthesis; dUMP from dCTP (dUTP route): step 2/2. Functionally, this enzyme is involved in nucleotide metabolism: it produces dUMP, the immediate precursor of thymidine nucleotides and it decreases the intracellular concentration of dUTP so that uracil cannot be incorporated into DNA. The sequence is that of Deoxyuridine 5'-triphosphate nucleotidohydrolase from Shewanella denitrificans (strain OS217 / ATCC BAA-1090 / DSM 15013).